The chain runs to 74 residues: uncharacterized protein (74 aa).

Residues L8 to A30 form a helical membrane-spanning segment.

It is found in the mitochondrion outer membrane. This is an uncharacterized protein from Saccharomyces cerevisiae (strain ATCC 204508 / S288c) (Baker's yeast).